The sequence spans 223 residues: Adapter protein MecA (223 aa).

This sequence belongs to the MecA family. Homodimer.

Functionally, enables the recognition and targeting of unfolded and aggregated proteins to the ClpC protease or to other proteins involved in proteolysis. The sequence is that of Adapter protein MecA from Limosilactobacillus reuteri (strain DSM 20016) (Lactobacillus reuteri).